The primary structure comprises 468 residues: Nuclear distribution protein PAC1-2 (468 aa).

The region spanning 13–45 (QAEELHKSIIAYLTSLNLATTANTLRAELNLPE) is the LisH domain. Positions 66-92 (SVIRLQKKVLDLQAENAHLKNEIENAG) form a coiled coil. 8 WD repeats span residues 118–159 (GHRL…RTLK), 161–201 (HTKA…KNIR), 205–251 (GHDH…CVKT), 254–293 (GHND…PECR), 298–358 (GHEN…IKVL), 360–399 (GHDN…KCVQ), 404–429 (MFDG…GDAG), and 430–468 (DGTP…IFAN).

Belongs to the WD repeat LIS1/nudF family. Self-associates. Interacts with NDL1 and dynein.

The protein localises to the cytoplasm. The protein resides in the cytoskeleton. Its subcellular location is the spindle pole. Functionally, positively regulates the activity of the minus-end directed microtubule motor protein dynein. May enhance dynein-mediated microtubule sliding by targeting dynein to the microtubule plus end. Required for nuclear migration during vegetative growth as well as development. Required for retrograde early endosome (EE) transport from the hyphal tip. Required for localization of dynein to the mitotic spindle poles. Recruits additional proteins to the dynein complex at SPBs. The protein is Nuclear distribution protein PAC1-2 of Podospora anserina (strain S / ATCC MYA-4624 / DSM 980 / FGSC 10383) (Pleurage anserina).